A 445-amino-acid polypeptide reads, in one-letter code: Ribosomal protein uS12 methylthiotransferase RimO (445 aa).

An MTTase N-terminal domain is found at 4 to 119 (IKVALVSLGC…LLESIKVFLK (116 aa)). Positions 13, 48, 82, 156, 160, and 163 each coordinate [4Fe-4S] cluster. The 231-residue stretch at 142–372 (TTPTYTAYVR…MILQQSISKD (231 aa)) folds into the Radical SAM core domain. One can recognise a TRAM domain in the interval 375–441 (KEKIGKIYEV…EYDLIGVVYN (67 aa)).

It belongs to the methylthiotransferase family. RimO subfamily. It depends on [4Fe-4S] cluster as a cofactor.

It is found in the cytoplasm. The catalysed reaction is L-aspartate(89)-[ribosomal protein uS12]-hydrogen + (sulfur carrier)-SH + AH2 + 2 S-adenosyl-L-methionine = 3-methylsulfanyl-L-aspartate(89)-[ribosomal protein uS12]-hydrogen + (sulfur carrier)-H + 5'-deoxyadenosine + L-methionine + A + S-adenosyl-L-homocysteine + 2 H(+). Catalyzes the methylthiolation of an aspartic acid residue of ribosomal protein uS12. The sequence is that of Ribosomal protein uS12 methylthiotransferase RimO from Clostridium botulinum (strain Loch Maree / Type A3).